Here is a 47-residue protein sequence, read N- to C-terminus: Large ribosomal subunit protein bL34 (47 aa).

Basic residues-rich tracts occupy residues 1-22 (MAKG…HGFR) and 36-47 (ARRRKGRKSLTA). Residues 1–47 (MAKGKRTFQPNNRRRSRVHGFRSRMSTRAGRAIVSARRRKGRKSLTA) form a disordered region.

The protein belongs to the bacterial ribosomal protein bL34 family.

The sequence is that of Large ribosomal subunit protein bL34 from Corynebacterium kroppenstedtii (strain DSM 44385 / JCM 11950 / CIP 105744 / CCUG 35717).